The chain runs to 465 residues: Ribulose bisphosphate carboxylase large chain (465 aa).

N6,N6,N6-trimethyllysine is present on Lys-4. Substrate contacts are provided by Asn-113 and Thr-163. Catalysis depends on Lys-165, which acts as the Proton acceptor. Lys-167 is a binding site for substrate. Positions 191, 193, and 194 each coordinate Mg(2+). The residue at position 191 (Lys-191) is an N6-carboxylysine. His-284 (proton acceptor) is an active-site residue. Substrate contacts are provided by Arg-285, His-317, and Ser-369.

The protein belongs to the RuBisCO large chain family. Type I subfamily. Heterohexadecamer of 8 large chains and 8 small chains; disulfide-linked. The disulfide link is formed within the large subunit homodimers. Mg(2+) serves as cofactor. Post-translationally, the disulfide bond which can form in the large chain dimeric partners within the hexadecamer appears to be associated with oxidative stress and protein turnover.

It is found in the plastid. The protein resides in the chloroplast. The enzyme catalyses 2 (2R)-3-phosphoglycerate + 2 H(+) = D-ribulose 1,5-bisphosphate + CO2 + H2O. The catalysed reaction is D-ribulose 1,5-bisphosphate + O2 = 2-phosphoglycolate + (2R)-3-phosphoglycerate + 2 H(+). Functionally, ruBisCO catalyzes two reactions: the carboxylation of D-ribulose 1,5-bisphosphate, the primary event in carbon dioxide fixation, as well as the oxidative fragmentation of the pentose substrate in the photorespiration process. Both reactions occur simultaneously and in competition at the same active site. This chain is Ribulose bisphosphate carboxylase large chain, found in Morus rubra (Red mulberry).